The following is a 171-amino-acid chain: Synaptonemal complex central element protein 2 (171 aa).

The disordered stretch occupies residues 1–52 (MERHGVAAPPVELKDQEPPAIVESGEHRQSENHEETPGSVAPSASCQLPGPF). The segment covering 24–36 (SGEHRQSENHEET) has biased composition (basic and acidic residues). 2 coiled-coil regions span residues 52 to 83 (FSSLDSSIETLKKKAQELIENINESRQKDHAL) and 118 to 146 (QERLQEFTQKMAKINHLEMELKQVCQTVE).

Belongs to the SYCE family. As to quaternary structure, homodimer. Found in a complex with SYCP1 and SYCE1. Interacts with SYCP1 and SYCE1. Interacts with SYCE3. Interacts with TEX12. Meiotic cells (at protein level). Expressed in the ovary and testis.

The protein resides in the nucleus. It localises to the chromosome. Its function is as follows. Major component of the transverse central element of synaptonemal complexes (SCS), formed between homologous chromosomes during meiotic prophase. Requires SYCP1 in order to be incorporated into the central element. May have a role in the synaptonemal complex assembly, stabilization and recombination. The protein is Synaptonemal complex central element protein 2 (Syce2) of Mus musculus (Mouse).